Reading from the N-terminus, the 190-residue chain is Small ribosomal subunit protein uS5 (190 aa).

One can recognise an S5 DRBM domain in the interval 22–85 (FVDKLVHINR…ESAKRNLTRV (64 aa)).

The protein belongs to the universal ribosomal protein uS5 family. In terms of assembly, part of the 30S ribosomal subunit. Contacts proteins S4 and S8.

In terms of biological role, with S4 and S12 plays an important role in translational accuracy. Its function is as follows. Located at the back of the 30S subunit body where it stabilizes the conformation of the head with respect to the body. The sequence is that of Small ribosomal subunit protein uS5 from Rhodopseudomonas palustris (strain BisB18).